A 168-amino-acid polypeptide reads, in one-letter code: Ribosome maturation factor RimP (168 aa).

This sequence belongs to the RimP family.

Its subcellular location is the cytoplasm. Functionally, required for maturation of 30S ribosomal subunits. The chain is Ribosome maturation factor RimP from Rickettsia bellii (strain OSU 85-389).